The chain runs to 232 residues: Enolase-phosphatase E1 (232 aa).

This sequence belongs to the HAD-like hydrolase superfamily. MasA/MtnC family. As to quaternary structure, monomer. Requires Mg(2+) as cofactor.

The catalysed reaction is 5-methylsulfanyl-2,3-dioxopentyl phosphate + H2O = 1,2-dihydroxy-5-(methylsulfanyl)pent-1-en-3-one + phosphate. It functions in the pathway amino-acid biosynthesis; L-methionine biosynthesis via salvage pathway; L-methionine from S-methyl-5-thio-alpha-D-ribose 1-phosphate: step 3/6. It participates in amino-acid biosynthesis; L-methionine biosynthesis via salvage pathway; L-methionine from S-methyl-5-thio-alpha-D-ribose 1-phosphate: step 4/6. Functionally, bifunctional enzyme that catalyzes the enolization of 2,3-diketo-5-methylthiopentyl-1-phosphate (DK-MTP-1-P) into the intermediate 2-hydroxy-3-keto-5-methylthiopentenyl-1-phosphate (HK-MTPenyl-1-P), which is then dephosphorylated to form the acireductone 1,2-dihydroxy-3-keto-5-methylthiopentene (DHK-MTPene). In Xylella fastidiosa (strain M12), this protein is Enolase-phosphatase E1.